Reading from the N-terminus, the 265-residue chain is Small ribosomal subunit protein uS2 (265 aa).

It belongs to the universal ribosomal protein uS2 family.

In Microcystis aeruginosa (strain NIES-843 / IAM M-2473), this protein is Small ribosomal subunit protein uS2.